Consider the following 199-residue polypeptide: Photosystem I reaction center subunit XI (199 aa).

The next 2 membrane-spanning stretches (helical) occupy residues 108–128 (LTAG…LFVL) and 165–185 (FWLG…TLHL).

Belongs to the PsaL family.

The protein resides in the cellular thylakoid membrane. The polypeptide is Photosystem I reaction center subunit XI (Prochlorococcus marinus (strain MIT 9301)).